A 327-amino-acid chain; its full sequence is GMP reductase (327 aa).

The active-site Thioimidate intermediate is the Cys175. An NADP(+)-binding site is contributed by Ile204–Val227.

The protein belongs to the IMPDH/GMPR family. GuaC type 2 subfamily.

It carries out the reaction IMP + NH4(+) + NADP(+) = GMP + NADPH + 2 H(+). Catalyzes the irreversible NADPH-dependent deamination of GMP to IMP. It functions in the conversion of nucleobase, nucleoside and nucleotide derivatives of G to A nucleotides, and in maintaining the intracellular balance of A and G nucleotides. The sequence is that of GMP reductase from Lysinibacillus sphaericus (strain C3-41).